Reading from the N-terminus, the 184-residue chain is U3 small nucleolar ribonucleoprotein protein IMP3 (184 aa).

The S4 RNA-binding domain occupies 109–175 (RRLPTVLLKL…IKRHVLEYNE (67 aa)).

The protein belongs to the universal ribosomal protein uS4 family. Part of the small subunit (SSU) processome, composed of more than 70 proteins and the RNA chaperone small nucleolar RNA (snoRNA) U3. Component of a heterotrimeric complex containing IMP3, IMP4 and MPHOSPH10. Interacts with MPHOSPH10.

The protein localises to the nucleus. Its subcellular location is the nucleolus. Functionally, component of the 60-80S U3 small nucleolar ribonucleoprotein (U3 snoRNP). Required for the early cleavages during pre-18S ribosomal RNA processing. Part of the small subunit (SSU) processome, first precursor of the small eukaryotic ribosomal subunit. During the assembly of the SSU processome in the nucleolus, many ribosome biogenesis factors, an RNA chaperone and ribosomal proteins associate with the nascent pre-rRNA and work in concert to generate RNA folding, modifications, rearrangements and cleavage as well as targeted degradation of pre-ribosomal RNA by the RNA exosome. This chain is U3 small nucleolar ribonucleoprotein protein IMP3, found in Homo sapiens (Human).